The chain runs to 240 residues: UDP-2,3-diacylglucosamine hydrolase (240 aa).

5 residues coordinate Mn(2+): Asp7, His9, Asp40, Asn78, and His113. Residue 78–79 participates in substrate binding; sequence NR. Substrate-binding residues include Asp121, Ser159, Thr163, Lys166, and His194. His194 and His196 together coordinate Mn(2+).

Belongs to the LpxH family. The cofactor is Mn(2+).

The protein localises to the cell inner membrane. It carries out the reaction UDP-2-N,3-O-bis[(3R)-3-hydroxytetradecanoyl]-alpha-D-glucosamine + H2O = 2-N,3-O-bis[(3R)-3-hydroxytetradecanoyl]-alpha-D-glucosaminyl 1-phosphate + UMP + 2 H(+). The protein operates within glycolipid biosynthesis; lipid IV(A) biosynthesis; lipid IV(A) from (3R)-3-hydroxytetradecanoyl-[acyl-carrier-protein] and UDP-N-acetyl-alpha-D-glucosamine: step 4/6. Hydrolyzes the pyrophosphate bond of UDP-2,3-diacylglucosamine to yield 2,3-diacylglucosamine 1-phosphate (lipid X) and UMP by catalyzing the attack of water at the alpha-P atom. Involved in the biosynthesis of lipid A, a phosphorylated glycolipid that anchors the lipopolysaccharide to the outer membrane of the cell. This chain is UDP-2,3-diacylglucosamine hydrolase, found in Pseudomonas entomophila (strain L48).